A 388-amino-acid chain; its full sequence is Chorismate synthase (388 aa).

Positions 39 and 45 each coordinate NADP(+). Residues 130 to 132 (RSS), 251 to 252 (NA), G296, 311 to 315 (KPIPT), and R337 each bind FMN.

This sequence belongs to the chorismate synthase family. In terms of assembly, homotetramer. FMNH2 serves as cofactor.

It catalyses the reaction 5-O-(1-carboxyvinyl)-3-phosphoshikimate = chorismate + phosphate. It functions in the pathway metabolic intermediate biosynthesis; chorismate biosynthesis; chorismate from D-erythrose 4-phosphate and phosphoenolpyruvate: step 7/7. Functionally, catalyzes the anti-1,4-elimination of the C-3 phosphate and the C-6 proR hydrogen from 5-enolpyruvylshikimate-3-phosphate (EPSP) to yield chorismate, which is the branch point compound that serves as the starting substrate for the three terminal pathways of aromatic amino acid biosynthesis. This reaction introduces a second double bond into the aromatic ring system. In Geobacillus sp. (strain WCH70), this protein is Chorismate synthase.